We begin with the raw amino-acid sequence, 217 residues long: GTP-binding protein Rit2 (217 aa).

Residues 27–34 (GAGGVGKS), 74–78 (DTAGQ), and 133–136 (NKID) contribute to the GTP site.

The protein belongs to the small GTPase superfamily. Ras family. In terms of assembly, interacts with AFDN, the C-terminal domain of RALGDS and RLF, but not with RIN1 and PIK3CA. RLF binds exclusively to the active GTP-bound form. Binds calmodulin. Interacts with PLXNB3.

Its subcellular location is the nucleus. It localises to the cell membrane. It catalyses the reaction GTP + H2O = GDP + phosphate + H(+). Its activity is regulated as follows. Alternates between an inactive form bound to GDP and an active form bound to GTP. Its function is as follows. Binds and exchanges GTP and GDP. The polypeptide is GTP-binding protein Rit2 (Rit2) (Rattus norvegicus (Rat)).